The following is a 215-amino-acid chain: Ubiquitin-conjugating enzyme E2 S (215 aa).

In terms of domain architecture, UBC core spans Asp-9–Ser-155. Cys-93 (glycyl thioester intermediate) is an active-site residue. The disordered stretch occupies residues Ile-159–Leu-215. A compositionally biased stretch (low complexity) spans Ser-161–Ser-190.

This sequence belongs to the ubiquitin-conjugating enzyme family.

The catalysed reaction is S-ubiquitinyl-[E1 ubiquitin-activating enzyme]-L-cysteine + [E2 ubiquitin-conjugating enzyme]-L-cysteine = [E1 ubiquitin-activating enzyme]-L-cysteine + S-ubiquitinyl-[E2 ubiquitin-conjugating enzyme]-L-cysteine.. It functions in the pathway protein modification; protein ubiquitination. Its function is as follows. Catalyzes the covalent attachment of ubiquitin to other proteins. Acts as an essential factor of the anaphase promoting complex/cyclosome (APC/C), a cell cycle-regulated ubiquitin ligase that controls progression through mitosis. Acts by specifically elongating polyubiquitin chains initiated by the E2 enzyme ubch10 on APC/C substrates, enhancing the degradation of APC/C substrates by the proteasome and promoting mitotic exit. The protein is Ubiquitin-conjugating enzyme E2 S (ube2s) of Dictyostelium discoideum (Social amoeba).